The primary structure comprises 370 residues: Anthranilate phosphoribosyltransferase (370 aa).

Residues G82, G85–D86, T90, N92–T95, K110–S118, and S122 contribute to the 5-phospho-alpha-D-ribose 1-diphosphate site. An anthranilate-binding site is contributed by G82. S94 serves as a coordination point for Mg(2+). N113 provides a ligand contact to anthranilate. Position 168 (R168) interacts with anthranilate. Residues D226 and E227 each contribute to the Mg(2+) site.

It belongs to the anthranilate phosphoribosyltransferase family. In terms of assembly, homodimer. Mg(2+) is required as a cofactor.

It carries out the reaction N-(5-phospho-beta-D-ribosyl)anthranilate + diphosphate = 5-phospho-alpha-D-ribose 1-diphosphate + anthranilate. It functions in the pathway amino-acid biosynthesis; L-tryptophan biosynthesis; L-tryptophan from chorismate: step 2/5. In terms of biological role, catalyzes the transfer of the phosphoribosyl group of 5-phosphorylribose-1-pyrophosphate (PRPP) to anthranilate to yield N-(5'-phosphoribosyl)-anthranilate (PRA). This chain is Anthranilate phosphoribosyltransferase, found in Methanosarcina mazei (strain ATCC BAA-159 / DSM 3647 / Goe1 / Go1 / JCM 11833 / OCM 88) (Methanosarcina frisia).